The primary structure comprises 89 residues: MNKSELIEAIAQEADISKAAAQKALDATTNAVTTALKQGDTVTLVGFGTFYVGERAERQGRNPKTGEPLTIAAAKTPKFRAGKALKDAL.

It belongs to the bacterial histone-like protein family. In terms of assembly, homodimer. The dimer interacts with the DNA mimic protein DMP12. It also interacts with the monomeric form of the DNA mimic protein DMP19 with 1:1 stoichiometry.

With respect to regulation, activity is regulated by the DNA mimic protein DMP12. Activity is inhibited in the presence of the DNA mimic protein DMP19, which interacts with HU and prevents the binding of HU to DNA. Functionally, histone-like DNA-binding protein which is capable of wrapping DNA to stabilize it, and thus to prevent its denaturation under extreme environmental conditions. The sequence is that of DNA-binding protein HU from Neisseria meningitidis serogroup B (strain ATCC BAA-335 / MC58).